Consider the following 347-residue polypeptide: MEAGMKLGLQLGYWGAQPPQNHAELVAAAEDAGFDTVFTAEAWGSDAYTPLAWWGSSTQRVRLGTSVIQLSARTPTACAMAALTLDHLSGGRHILGLGVSGPQVVEGWYGQRFPKPLARTREYIDIVRQVWARESPVTSAGPHYRLPLTGEGTTGLGKALKPITHPLRADIPIMLGAEGPKNVALAAEICDGWLPIFYSPRMAGMYNEWLDEGFARPGARRSREDFEICATAQVVITDDRAAAFAGIKPFLALYMGGMGAEETNFHADVYRRMGYTQVVDEVTKLFRSGRKDEAAEIIPDELVDDAVIVGDIDHVRKQMAVWEAAGVTMMVVTAGSAEQVRDLAALV.

This is Putative coenzyme F420-dependent oxidoreductase Rv3520c from Mycobacterium tuberculosis (strain ATCC 25618 / H37Rv).